The primary structure comprises 1290 residues: Vacuolating cytotoxin autotransporter (1290 aa).

Residues 1–33 form the signal peptide; sequence MEIQQTHRKINRPLVSLALVGALVSITPQQSHA. Positions 326–374 are disordered; it reads PPEGGYKDKPKDKPSNTTQNNANNNQQNSAQNNSNTQVINPPNSAQKTE. Residues 330 to 339 show a composition bias toward basic and acidic residues; it reads GYKDKPKDKP. A compositionally biased stretch (low complexity) spans 340–362; the sequence is SNTTQNNANNNQQNSAQNNSNTQ. Residues 363 to 374 are compositionally biased toward polar residues; it reads VINPPNSAQKTE. Residues 1018–1290 enclose the Autotransporter domain; that stretch reads KYEKPTNVWA…ASNLGMRYSF (273 aa).

The protein localises to the periplasm. The protein resides in the secreted. Its subcellular location is the cell surface. It localises to the cell outer membrane. In terms of biological role, induces vacuolation of eukaryotic cells. Causes ulceration and gastric lesions. This is Vacuolating cytotoxin autotransporter (vacA) from Helicobacter pylori (strain ATCC 700392 / 26695) (Campylobacter pylori).